Reading from the N-terminus, the 418-residue chain is MFRRLLIATVVGILAAFAVAGFRHAMLLLEWLFLNNDSGSLVNAATNLSPWRRLLTPALGGLAAGLLLMGWQKFTQQRPHAPTDYMEALQTDGQFDYAASLVKSLASLLVVTSGSAIGREGAMILLAALAASCFAQRFTPRQEWKLWIACGAAAGMAAAYRAPLAGSLFIAEVLFGTMMLASLGPVIISAVVALLVSNLINHSDALLYSVQLSVTVQARDYALIISTGVLAGLCGPLLLTLMNACHREFVSLKLAPPWQLALGGLIVGLLSLFTPAVWGNGYSTVQSFLTAPPLLMIIAGIFLCKLFAVLASSGSGAPGGVFTPTLFIGLAIGMLYGRSLGLWFPDGEEITLLLGLTGMATLLAATTHAPIMSTLMICEMTGEYQLLPGLLIACVIASVISRTLHRDSIYRQHTAKHS.

A run of 10 helical transmembrane segments spans residues 5–25 (LLIATVVGILAAFAVAGFRHA), 54–74 (LLTPALGGLAAGLLLMGWQKF), 146–166 (LWIACGAAAGMAAAYRAPLAG), 168–188 (LFIAEVLFGTMMLASLGPVII), 222–242 (ALIISTGVLAGLCGPLLLTLM), 258–278 (WQLALGGLIVGLLSLFTPAVW), 291–311 (APPLLMIIAGIFLCKLFAVLA), 316–336 (GAPGGVFTPTLFIGLAIGMLY), 352–372 (LLLGLTGMATLLAATTHAPIM), and 380–400 (MTGEYQLLPGLLIACVIASVI).

It belongs to the chloride channel (TC 2.A.49) family. ClcB subfamily.

The protein resides in the cell inner membrane. Functionally, probably acts as an electrical shunt for an outwardly-directed proton pump that is linked to amino acid decarboxylation, as part of the extreme acid resistance (XAR) response. In Escherichia coli O17:K52:H18 (strain UMN026 / ExPEC), this protein is Voltage-gated ClC-type chloride channel ClcB.